Here is a 109-residue protein sequence, read N- to C-terminus: Phosphoribosyl-ATP pyrophosphatase (109 aa).

Belongs to the PRA-PH family.

The protein resides in the cytoplasm. It carries out the reaction 1-(5-phospho-beta-D-ribosyl)-ATP + H2O = 1-(5-phospho-beta-D-ribosyl)-5'-AMP + diphosphate + H(+). The protein operates within amino-acid biosynthesis; L-histidine biosynthesis; L-histidine from 5-phospho-alpha-D-ribose 1-diphosphate: step 2/9. This Marinobacter nauticus (strain ATCC 700491 / DSM 11845 / VT8) (Marinobacter aquaeolei) protein is Phosphoribosyl-ATP pyrophosphatase.